The sequence spans 32 residues: Photosystem I reaction center subunit XII (32 aa).

Residues valine 9–tyrosine 31 traverse the membrane as a helical segment.

Belongs to the PsaM family.

It localises to the plastid. Its subcellular location is the chloroplast thylakoid membrane. This chain is Photosystem I reaction center subunit XII, found in Chaetosphaeridium globosum (Charophycean green alga).